The primary structure comprises 156 residues: Ribosomal RNA large subunit methyltransferase H (156 aa).

Residues Leu73, Gly104, and 123 to 128 (LSALTL) each bind S-adenosyl-L-methionine.

It belongs to the RNA methyltransferase RlmH family. Homodimer.

It is found in the cytoplasm. The enzyme catalyses pseudouridine(1915) in 23S rRNA + S-adenosyl-L-methionine = N(3)-methylpseudouridine(1915) in 23S rRNA + S-adenosyl-L-homocysteine + H(+). In terms of biological role, specifically methylates the pseudouridine at position 1915 (m3Psi1915) in 23S rRNA. The protein is Ribosomal RNA large subunit methyltransferase H of Shewanella pealeana (strain ATCC 700345 / ANG-SQ1).